A 137-amino-acid polypeptide reads, in one-letter code: Golgin subfamily A member 7 (137 aa).

2 S-palmitoyl cysteine lipidation sites follow: cysteine 69 and cysteine 72.

Belongs to the ERF4 family. In terms of assembly, interacts with ZDHHC9.

The protein resides in the golgi apparatus membrane. In terms of biological role, may be involved in protein transport from Golgi to cell surface. The ZDHHC9-GOLGA7 complex is a palmitoyltransferase specific for HRAS and NRAS. The polypeptide is Golgin subfamily A member 7 (GOLGA7) (Gallus gallus (Chicken)).